A 622-amino-acid polypeptide reads, in one-letter code: Zinc finger protein ZIC 5 (622 aa).

Disordered regions lie at residues 50–171, 190–223, 232–251, and 321–349; these read MHLH…KGHS, HGAPLGGEQRSGSSSPQHPTPPPHPAGMFISASG, GSALFPALHDSPGAPGGHPL, and PGPHLQHHAPPPAPPPAPAPHPHHPHLPG. The segment covering 126–151 has biased composition (pro residues); the sequence is APPPPAPPLPPSQSSSPPPPPPPPPA. Residues 329-340 show a composition bias toward pro residues; the sequence is APPPAPPPAPAP. A C2H2-type 1; degenerate zinc finger spans residues 422–444; the sequence is EDCPREGKPFKAKYKLINHIRVH. 3 consecutive C2H2-type zinc fingers follow at residues 450 to 474, 480 to 504, and 510 to 534; these read FPCPFPGCGKVFARSENLKIHKRTH, FKCEFDGCDRKFANSSDRKKHSHVH, and YYCKIRGCDKSYTHPSSLRKHMKIH. 2 disordered regions span residues 531–573 and 590–622; these read MKIH…STLS and APSHLHTPSSNGTTSESEDEEMYGNPEVMRTIH. A phosphoserine mark is found at serine 537, serine 541, and serine 559. The span at 595–604 shows a compositional bias: polar residues; that stretch reads HTPSSNGTTS.

This sequence belongs to the GLI C2H2-type zinc-finger protein family.

Its subcellular location is the nucleus. Its function is as follows. Essential for neural crest development, converting cells from an epidermal fate to a neural crest cell fate. Binds to DNA. This is Zinc finger protein ZIC 5 (Zic5) from Mus musculus (Mouse).